The chain runs to 494 residues: Anthranilate synthase component 1 (494 aa).

L-tryptophan is bound by residues S52 and 274–276 (PYM). Position 309–310 (309–310 (GT)) interacts with chorismate. E336 contributes to the Mg(2+) binding site. Chorismate contacts are provided by residues Y424, R444, 458–460 (GAG), and G460. E473 is a Mg(2+) binding site.

This sequence belongs to the anthranilate synthase component I family. As to quaternary structure, heterotetramer consisting of two non-identical subunits: a beta subunit (TrpG) and a large alpha subunit (TrpE). Mg(2+) is required as a cofactor.

It catalyses the reaction chorismate + L-glutamine = anthranilate + pyruvate + L-glutamate + H(+). The protein operates within amino-acid biosynthesis; L-tryptophan biosynthesis; L-tryptophan from chorismate: step 1/5. Feedback inhibited by tryptophan. Part of a heterotetrameric complex that catalyzes the two-step biosynthesis of anthranilate, an intermediate in the biosynthesis of L-tryptophan. In the first step, the glutamine-binding beta subunit (TrpG) of anthranilate synthase (AS) provides the glutamine amidotransferase activity which generates ammonia as a substrate that, along with chorismate, is used in the second step, catalyzed by the large alpha subunit of AS (TrpE) to produce anthranilate. In the absence of TrpG, TrpE can synthesize anthranilate directly from chorismate and high concentrations of ammonia. The chain is Anthranilate synthase component 1 (trpE) from Aquifex aeolicus (strain VF5).